The following is a 267-amino-acid chain: tRNA pseudouridine synthase A (267 aa).

The Nucleophile role is filled by Asp-51. Residue Tyr-109 participates in substrate binding.

Belongs to the tRNA pseudouridine synthase TruA family. Homodimer.

The enzyme catalyses uridine(38/39/40) in tRNA = pseudouridine(38/39/40) in tRNA. Its function is as follows. Formation of pseudouridine at positions 38, 39 and 40 in the anticodon stem and loop of transfer RNAs. This is tRNA pseudouridine synthase A from Staphylococcus epidermidis (strain ATCC 12228 / FDA PCI 1200).